The chain runs to 243 residues: Ubiquinone/menaquinone biosynthesis C-methyltransferase UbiE (243 aa).

Residues T69, D90, and 116 to 117 (DA) contribute to the S-adenosyl-L-methionine site.

It belongs to the class I-like SAM-binding methyltransferase superfamily. MenG/UbiE family.

The enzyme catalyses a 2-demethylmenaquinol + S-adenosyl-L-methionine = a menaquinol + S-adenosyl-L-homocysteine + H(+). It carries out the reaction a 2-methoxy-6-(all-trans-polyprenyl)benzene-1,4-diol + S-adenosyl-L-methionine = a 5-methoxy-2-methyl-3-(all-trans-polyprenyl)benzene-1,4-diol + S-adenosyl-L-homocysteine + H(+). The protein operates within quinol/quinone metabolism; menaquinone biosynthesis; menaquinol from 1,4-dihydroxy-2-naphthoate: step 2/2. It participates in cofactor biosynthesis; ubiquinone biosynthesis. In terms of biological role, methyltransferase required for the conversion of demethylmenaquinol (DMKH2) to menaquinol (MKH2) and the conversion of 2-polyprenyl-6-methoxy-1,4-benzoquinol (DDMQH2) to 2-polyprenyl-3-methyl-6-methoxy-1,4-benzoquinol (DMQH2). This chain is Ubiquinone/menaquinone biosynthesis C-methyltransferase UbiE, found in Burkholderia mallei (strain NCTC 10247).